A 107-amino-acid polypeptide reads, in one-letter code: Heme-degrading monooxygenase (107 aa).

In terms of domain architecture, ABM spans 2 to 93 (VIVANKTLIR…DYILGNEIEF (92 aa)). Asn6 lines the Fe cation pocket. His76 serves as a coordination point for heme.

The protein belongs to the antibiotic biosynthesis monooxygenase family. Heme-degrading monooxygenase IsdG subfamily. Homodimer.

The protein resides in the cytoplasm. The enzyme catalyses heme b + 3 reduced [NADPH--hemoprotein reductase] + 3 O2 = biliverdin IXalpha + CO + Fe(2+) + 3 oxidized [NADPH--hemoprotein reductase] + 3 H2O + H(+). Functionally, allows bacterial pathogens to use the host heme as an iron source. Catalyzes the oxidative degradation of the heme macrocyclic porphyrin ring to the biliverdin in the presence of a suitable electron donor such as ascorbate or NADPH--cytochrome P450 reductase, with subsequent release of free iron. The polypeptide is Heme-degrading monooxygenase (Shouchella clausii (strain KSM-K16) (Alkalihalobacillus clausii)).